The following is a 296-amino-acid chain: NAD kinase (296 aa).

Aspartate 72 (proton acceptor) is an active-site residue. Residues aspartate 72–glycine 73, asparagine 146–aspartate 147, arginine 157, lysine 174, aspartate 176, threonine 187–serine 192, and glutamine 247 contribute to the NAD(+) site.

This sequence belongs to the NAD kinase family. A divalent metal cation serves as cofactor.

The protein resides in the cytoplasm. The catalysed reaction is NAD(+) + ATP = ADP + NADP(+) + H(+). Its function is as follows. Involved in the regulation of the intracellular balance of NAD and NADP, and is a key enzyme in the biosynthesis of NADP. Catalyzes specifically the phosphorylation on 2'-hydroxyl of the adenosine moiety of NAD to yield NADP. In Pseudomonas fluorescens (strain SBW25), this protein is NAD kinase.